We begin with the raw amino-acid sequence, 416 residues long: Iron/alpha-ketoglutarate-dependent dioxygenase asqJ (416 aa).

Positions 1–53 (MGYPKAFTSSDSEPEPDLSRDLGNPVMGNPGVVSRSSSTVAQHSVRNNPTGPD) are disordered. A compositionally biased stretch (polar residues) spans 34–50 (SRSSSTVAQHSVRNNPT). Residues H242, D244, and H319 each contribute to the Fe cation site.

Belongs to the PhyH family. In terms of assembly, homodimer. Fe cation serves as cofactor.

It catalyses the reaction (-)-4'-methoxycyclopeptine + 2-oxoglutarate + O2 = (Z)-4'-methoxydehydrocyclopeptine + succinate + CO2 + H2O. The enzyme catalyses (Z)-4'-methoxydehydrocyclopeptine + 2-oxoglutarate + O2 = (-)-4'-methoxycyclopenine + succinate + CO2. It carries out the reaction (-)-cyclopeptine + 2-oxoglutarate + O2 = (Z)-dehydrocyclopeptine + succinate + CO2 + H2O. The catalysed reaction is (Z)-dehydrocyclopeptine + 2-oxoglutarate + O2 = (-)-cyclopenine + succinate + CO2. The protein operates within secondary metabolite biosynthesis. Its pathway is alkaloid biosynthesis. It functions in the pathway mycotoxin biosynthesis. Its function is as follows. Iron/alpha-ketoglutarate-dependent dioxygenase; part of the gene cluster that mediates the biosynthesis of the aspoquinolone mycotoxins. Within the pathway, the iron/alpha-ketoglutarate-dependent dioxygenase asqJ acts as a (-)-cyclopenine synthase that converts 4'-methoxycyclopeptin into 4'-methoxydehydrocyclopeptin through dehydrogenation to form a double bond between C-alpha and C-beta of the O-methyltyrosine side chain. AsqJ is a very unique dioxygenase which is capable of catalyzing radical-mediated dehydrogenation and epoxidation reactions sequentially on a 6,7-benzo-diazepinedione substrate in the 4'-methoxyviridicatin biosynthetic pathway. AsqJ is also capable of converting cyclopeptin into dehydrocyclopeptin. The first step of the pathway is catalyzed by the nonribosomal peptide synthetase asqK that condenses anthranilic acid and O-methyl-L-tyrosine to produce 4'-methoxycyclopeptin. 4'-methoxycyclopeptin is then converted to 4'-methoxydehydrocyclopeptin by the ketoglutarate-dependent dioxygenase asqJ. AsqJ also converts its first product 4'-methoxydehydrocyclopeptin to 4'-methoxycyclopenin. The following conversion of 4'-methoxycyclopenin into 4'-methoxyviridicatin is catalyzed by the cyclopenase asqI. 4'-methoxyviridicatin is the precursor of quinolone natural products, and is further converted to quinolinone B. The prenyltransferase asqH1 then catalyzes the canonical Friedel-Crafts alkylation of quinolinone B with dimethylallyl cation to yield dimethylallyl quinolone, which is subjected to FAD-dependent dehydrogenation by the FAD-linked oxidoreductase asqF to yield conjugated aryl diene. The delta(3') double bond then serves as the site of the second alkylation with DMAPP catalyzed by the prenyltransferase asqH2 to yield a carbenium ion intermediate, which can be attacked by H(2)O to yield a styrenyl quinolone containing a C3'-hydroxyprenyl chain. The FAD-dependent monooxygenase asqG performs epoxidation of the terminal C7'-C8' olefin. Finally, after dehydratation of the epoxide at C3 by asqC, the quinolone epoxide rearrangement protein asqO catalyzes an enzymatic 3-exo-tet cyclization to yield the cyclopropyl-THF ring system in aspoquinolone. The polypeptide is Iron/alpha-ketoglutarate-dependent dioxygenase asqJ (Emericella nidulans (strain FGSC A4 / ATCC 38163 / CBS 112.46 / NRRL 194 / M139) (Aspergillus nidulans)).